Reading from the N-terminus, the 655-residue chain is Very long-chain specific acyl-CoA dehydrogenase, mitochondrial (655 aa).

The N-terminal 40 residues, 1–40, are a transit peptide targeting the mitochondrion; that stretch reads MQAARIAPSLGRQLLRFGGGSSRPTALLGQPWPGPARRPY. The segment at 41–482 is catalytic; the sequence is AGGAAQLALD…ALQGCMDKGK (442 aa). N6-acetyllysine is present on lysine 51. Lysine 71 is modified (N6-acetyllysine; alternate). Lysine 71 carries the N6-succinyllysine; alternate modification. Lysine 195 carries the post-translational modification N6-succinyllysine. 214 to 223 provides a ligand contact to FAD; the sequence is FCLTEPSSGS. An S-nitrosocysteine modification is found at cysteine 237. Position 239 is an N6-acetyllysine; alternate (lysine 239). At lysine 239 the chain carries N6-succinyllysine; alternate. 249-251 contacts FAD; it reads WIS. An N6-acetyllysine; alternate mark is found at lysine 276 and lysine 278. N6-succinyllysine; alternate is present on residues lysine 276 and lysine 278. Position 298 is an N6-acetyllysine (lysine 298). An N6-acetyllysine; alternate modification is found at lysine 331. An N6-succinyllysine; alternate modification is found at lysine 331. Lysine 372 bears the N6-succinyllysine mark. Residue 461–463 coordinates substrate; sequence FEG. The active-site Proton acceptor is glutamate 462. 464 to 466 lines the FAD pocket; that stretch reads TND. N6-acetyllysine; alternate is present on lysine 482. Position 482 is an N6-succinyllysine; alternate (lysine 482). A membrane-anchoring region spans residues 483-516; that stretch reads ELSGLGSALKNPFGNAGLLLGEAGKQLRRRAGLG. Phosphoserine is present on residues serine 517 and serine 522. Lysine 550 carries the post-translational modification N6-acetyllysine. Lysine 556 bears the N6-acetyllysine; alternate mark. Residue lysine 556 is modified to N6-succinyllysine; alternate. Glutamine 562 is an FAD binding site. An N6-succinyllysine modification is found at lysine 639.

This sequence belongs to the acyl-CoA dehydrogenase family. Homodimer. Homodimerizes after import into the mitochondrion. The cofactor is FAD. In terms of processing, S-nitrosylation at Cys-237 in liver improves catalytic efficiency.

It localises to the mitochondrion inner membrane. The catalysed reaction is a very-long-chain 2,3-saturated fatty acyl-CoA + oxidized [electron-transfer flavoprotein] + H(+) = a very-long-chain (2E)-enoyl-CoA + reduced [electron-transfer flavoprotein]. It carries out the reaction dodecanoyl-CoA + oxidized [electron-transfer flavoprotein] + H(+) = (2E)-dodecenoyl-CoA + reduced [electron-transfer flavoprotein]. It catalyses the reaction tetradecanoyl-CoA + oxidized [electron-transfer flavoprotein] + H(+) = (2E)-tetradecenoyl-CoA + reduced [electron-transfer flavoprotein]. The enzyme catalyses oxidized [electron-transfer flavoprotein] + hexadecanoyl-CoA + H(+) = (2E)-hexadecenoyl-CoA + reduced [electron-transfer flavoprotein]. The catalysed reaction is octadecanoyl-CoA + oxidized [electron-transfer flavoprotein] + H(+) = (2E)-octadecenoyl-CoA + reduced [electron-transfer flavoprotein]. It carries out the reaction eicosanoyl-CoA + oxidized [electron-transfer flavoprotein] + H(+) = (2E)-eicosenoyl-CoA + reduced [electron-transfer flavoprotein]. It catalyses the reaction docosanoyl-CoA + oxidized [electron-transfer flavoprotein] + H(+) = (2E)-docosenoyl-CoA + reduced [electron-transfer flavoprotein]. The enzyme catalyses tetracosanoyl-CoA + oxidized [electron-transfer flavoprotein] + H(+) = (2E)-tetracosenoyl-CoA + reduced [electron-transfer flavoprotein]. Its pathway is lipid metabolism; mitochondrial fatty acid beta-oxidation. Functionally, very long-chain specific acyl-CoA dehydrogenase is one of the acyl-CoA dehydrogenases that catalyze the first step of mitochondrial fatty acid beta-oxidation, an aerobic process breaking down fatty acids into acetyl-CoA and allowing the production of energy from fats. The first step of fatty acid beta-oxidation consists in the removal of one hydrogen from C-2 and C-3 of the straight-chain fatty acyl-CoA thioester, resulting in the formation of trans-2-enoyl-CoA. Among the different mitochondrial acyl-CoA dehydrogenases, very long-chain specific acyl-CoA dehydrogenase acts specifically on acyl-CoAs with saturated 12 to 24 carbons long primary chains. The sequence is that of Very long-chain specific acyl-CoA dehydrogenase, mitochondrial from Macaca fascicularis (Crab-eating macaque).